A 412-amino-acid chain; its full sequence is Stachydrine N-demethylase (412 aa).

One can recognise a Rieske domain in the interval 45–150 (LYAVPVCQLA…LRNLDGLIYI (106 aa)). 4 residues coordinate [2Fe-2S] cluster: Cys86, His88, Cys106, and His109. The Fe cation site is built by His204, His209, and Asp360.

The protein belongs to the bacterial ring-hydroxylating dioxygenase alpha subunit family. In terms of assembly, homotrimer. The system is probably composed of an oxygenase subunit (Stc2) and two reductase subunits (Stc3 and Stc4). [2Fe-2S] cluster serves as cofactor. Requires Fe cation as cofactor.

The catalysed reaction is L-proline betaine + NADH + O2 + H(+) = N-methyl-L-proline + formaldehyde + NAD(+) + H2O. The enzyme catalyses L-proline betaine + NADPH + O2 + H(+) = N-methyl-L-proline + formaldehyde + NADP(+) + H2O. Functionally, monooxygenase involved in the catabolism of stachydrine (L-proline betaine), a source of carbon and nitrogen. Part of a Rieske-type oxygenase system that catalyzes the demethylation of stachydrine to produce N-methyl-L-proline (monomethylproline). Stc2 is the catalytic subunit. The polypeptide is Stachydrine N-demethylase (Rhizobium meliloti (strain 1021) (Ensifer meliloti)).